A 49-amino-acid chain; its full sequence is Large ribosomal subunit protein bL33B (49 aa).

It belongs to the bacterial ribosomal protein bL33 family.

In Latilactobacillus sakei subsp. sakei (strain 23K) (Lactobacillus sakei subsp. sakei), this protein is Large ribosomal subunit protein bL33B.